The primary structure comprises 1452 residues: ABC multidrug transporter A (1452 aa).

Residues 1–20 (MNESHEAGKNSSTNVEEREE) are disordered. Residues asparagine 2, asparagine 10, asparagine 228, asparagine 287, and asparagine 311 are each glycosylated (N-linked (GlcNAc...) asparagine). Residues 110–363 (LKTLSLARIA…FLQMGFVCPD (254 aa)) form the ABC transporter 1 domain. Transmembrane regions (helical) follow at residues 474 to 494 (VTIS…SIFY), 508 to 528 (ALLF…MLTL), 554 to 574 (MIMD…VLYF), 583 to 603 (GAFF…SMFF), 616 to 636 (VLPF…FAIP), and 725 to 745 (IGVI…ATDF). The ABC transporter 2 domain occupies 802 to 1044 (FQWKDVCFDI…ILIDYFVRNG (243 aa)). 838 to 845 (GVSGAGKT) lines the ATP pocket. The next 5 membrane-spanning stretches (helical) occupy residues 1153 to 1173 (ALCV…PNTI), 1183 to 1203 (IFML…HFVA), 1223 to 1243 (FLIA…VLMF), 1271 to 1291 (LMIW…IAAF), and 1297 to 1317 (AGNL…VLAT). Residues asparagine 1350, asparagine 1365, and asparagine 1391 are each glycosylated (N-linked (GlcNAc...) asparagine). The chain crosses the membrane as a helical span at residues 1418–1438 (FGLMWVFIVFNIFAACSLYWW).

Belongs to the ABC transporter superfamily. ABCG family. PDR (TC 3.A.1.205) subfamily.

Its subcellular location is the membrane. Its function is as follows. ABC transporter that seems not to be involved in the efflux of toxic substances, at least not the classical compounds such as itraconazole, amphotericin B, voriconazole, posaconazole, ravuconazole, or echinocandins. This chain is ABC multidrug transporter A, found in Aspergillus fumigatus (Neosartorya fumigata).